We begin with the raw amino-acid sequence, 240 residues long: Cilia- and flagella-associated protein 77 (240 aa).

Belongs to the CFAP77 family.

The protein resides in the cytoplasm. Its subcellular location is the cytoskeleton. It is found in the cilium axoneme. The protein localises to the flagellum axoneme. Microtubule inner protein (MIP) part of the dynein-decorated doublet microtubules (DMTs) in cilia axoneme, which is required for motile cilia beating. The sequence is that of Cilia- and flagella-associated protein 77 from Danio rerio (Zebrafish).